The chain runs to 237 residues: Large ribosomal subunit protein uL22m (237 aa).

Belongs to the universal ribosomal protein uL22 family.

Its subcellular location is the mitochondrion. This is Large ribosomal subunit protein uL22m (mrpl22) from Dictyostelium discoideum (Social amoeba).